The primary structure comprises 244 residues: Agamous-like MADS-box protein MADS2 (244 aa).

Residues 1 to 61 (MGRGRVELKR…GKLYEFCSSS (61 aa)) enclose the MADS-box domain. The K-box domain occupies 88 to 178 (EQSSYREYLK…TRKLDEISVK (91 aa)).

In terms of tissue distribution, expressed in flowers and seeds.

The protein localises to the nucleus. In terms of biological role, probable transcription factor involved in flower development. The polypeptide is Agamous-like MADS-box protein MADS2 (Vitis vinifera (Grape)).